The primary structure comprises 119 residues: Beta-2-microglobulin (119 aa).

An N-terminal signal peptide occupies residues 1–20 (MARSVAVVFLMLLSVVCLDA). The 90-residue stretch at 25–114 (PQVQVYTRHP…TTLKEPKVVT (90 aa)) folds into the Ig-like C1-type domain. C45 and C100 form a disulfide bridge.

Belongs to the beta-2-microglobulin family. In terms of assembly, heterodimer of an alpha chain and a beta chain. Beta-2-microglobulin is the beta-chain of major histocompatibility complex class I molecules.

The protein localises to the secreted. Functionally, component of the class I major histocompatibility complex (MHC). Involved in the presentation of peptide antigens to the immune system. In Cricetulus griseus (Chinese hamster), this protein is Beta-2-microglobulin (B2M).